A 391-amino-acid chain; its full sequence is MQQQSPPTAPQQQQQQQRERETYQLDHIGVHCNVTDCRVLDFLPFNCDLCNLSFCMEHKGYENHKCKNIEQRENKIVHPCPVCNCLIKVDSLANLDQTVRFIISVHMDTDCKFNQSKAPKSFKCSLKTCKTSEFVEVKCDKCKSNYCLKHRFPTNHSCTGKPIINSLSKPINTTINNNINNNTNNINNNINNNKNNNNNNNNNNNNNNNNNNNNNNNNNNNNNNNNNNNNNSNNNNKLIYPGNIKKNIVEDKQYYLEQKNQKSELQKLREEQNQRYKSSEEIGEIGIIQTNGARIQYDFMATDTLRSVQKFINSNRTDGTCSYALCTQPTGNPFTLNQLNLSIRQLGLLPVSTLYMLPLDNSNNFNNSGNNNNNSSDQSLLSYLNPFKYFK.

Low complexity predominate over residues 1 to 16; the sequence is MQQQSPPTAPQQQQQQ. Positions 1–20 are disordered; that stretch reads MQQQSPPTAPQQQQQQQRER. AN1-type zinc fingers lie at residues 26–74 and 118–166; these read DHIG…QREN and APKS…IINS. Zn(2+) is bound by residues C32, C37, C47, C50, C55, H58, H64, C66, C124, C129, C139, C142, C147, H150, H156, and C158. Over residues 185–236 the composition is skewed to low complexity; that stretch reads NINNNINNNKNNNNNNNNNNNNNNNNNNNNNNNNNNNNNNNNNNNNNSNNNN. A disordered region spans residues 185 to 240; the sequence is NINNNINNNKNNNNNNNNNNNNNNNNNNNNNNNNNNNNNNNNNNNNNSNNNNKLIY. The UBX domain occupies 278 to 356; it reads SSEEIGEIGI…GLLPVSTLYM (79 aa).

This is AN1-type zinc finger and UBX domain-containing protein DDB_G0268260 from Dictyostelium discoideum (Social amoeba).